A 41-amino-acid chain; its full sequence is Large ribosomal subunit protein bL36 (41 aa).

Belongs to the bacterial ribosomal protein bL36 family.

This chain is Large ribosomal subunit protein bL36, found in Parvibaculum lavamentivorans (strain DS-1 / DSM 13023 / NCIMB 13966).